Here is a 154-residue protein sequence, read N- to C-terminus: 3-dehydroquinate dehydratase (154 aa).

Tyrosine 23 acts as the Proton acceptor in catalysis. Substrate is bound by residues asparagine 74, histidine 80, and aspartate 87. Histidine 100 acts as the Proton donor in catalysis. Residues 101-102 (LS) and arginine 111 contribute to the substrate site.

The protein belongs to the type-II 3-dehydroquinase family. In terms of assembly, homododecamer.

It catalyses the reaction 3-dehydroquinate = 3-dehydroshikimate + H2O. The protein operates within metabolic intermediate biosynthesis; chorismate biosynthesis; chorismate from D-erythrose 4-phosphate and phosphoenolpyruvate: step 3/7. Functionally, catalyzes a trans-dehydration via an enolate intermediate. The protein is 3-dehydroquinate dehydratase of Actinobacillus pleuropneumoniae serotype 5b (strain L20).